The chain runs to 465 residues: MSISVTSHNDVSKLERIGAHSHIKGIGLNDNLEPKESSQGMVGQVKARRAAGVILKMIQEGRIAGRAILMAGPPSTGKTAIAMGMAQSLGSDTPFVTLSASEVYSLEMSKTEALLQALRKSIGVRIKEETEIIEGEVVEVQIDRSITGGNKQGKLTIRSTDMETVYDLGTKMIDSLTKEKVLAGDVISIDKSVGRVTKLGRSFSRARDYDAMGADTRFVQCPQGEIQKRKEVVHTVSLHDIDVINSRTQGFLALFSGDTGEIKPEVREQINTKVSEWREEGKAEIVPGVLFVDEVHMLDIECFSFFNRALEDDLAPIVIMASNRGITRIRGTNYRSPHGIPVDLLDRMLIISTLPYSHEEVKEILKIRCQEEDVDMEPSALDYLSTIGQETSLRYALLLISSSNQVALKRKSATIEESDIRRVYELFLDQKRSVEYLEEYGKNYITENEWSASGAQDNAVAMQED.

ATP is bound at residue 72-79 (GPPSTGKT).

Belongs to the RuvB family. As to quaternary structure, may form heterododecamers with RVB1. Component of the SWR1 chromatin remodeling complex, the INO80 chromatin remodeling complex, and of the R2TP complex. Interacts with dil1.

It is found in the nucleus. It carries out the reaction ATP + H2O = ADP + phosphate + H(+). Its function is as follows. DNA helicase which participates in several chromatin remodeling complexes, including the SWR1 and the INO80 complexes. The SWR1 complex mediates the ATP-dependent exchange of histone H2A for the H2A variant HZT1 leading to transcriptional regulation of selected genes by chromatin remodeling. The INO80 complex remodels chromatin by shifting nucleosomes and is involved in DNA repair. Also involved in pre-rRNA processing. This Schizosaccharomyces pombe (strain 972 / ATCC 24843) (Fission yeast) protein is RuvB-like helicase 2 (rvb2).